A 357-amino-acid chain; its full sequence is Eukaryotic translation initiation factor 3 subunit F (357 aa).

Residues 1 to 82 are disordered; the sequence is MATPAVPVSA…PAPALPGPAL (82 aa). A2 is subject to N-acetylalanine. Positions 9–36 are enriched in pro residues; that stretch reads SAPPATPTPVPAAAPASVPAPTPAPAAA. Over residues 37–74 the composition is skewed to low complexity; sequence PVPAAAPASSSDPAAAAAATAAPGQTPASAQAPAQTPA. Position 46 is a phosphoserine; by CDK11; in vitro (S46). The 131-residue stretch at 92-222 folds into the MPN domain; the sequence is VRLHPVILAS…IKAYVSTLMG (131 aa). Position 238 is an N6-acetyllysine (K238). Phosphoserine is present on S258.

It belongs to the eIF-3 subunit F family. As to quaternary structure, component of the eukaryotic translation initiation factor 3 (eIF-3) complex, which is composed of 13 subunits: EIF3A, EIF3B, EIF3C, EIF3D, EIF3E, EIF3F, EIF3G, EIF3H, EIF3I, EIF3J, EIF3K, EIF3L and EIF3M. The eIF-3 complex appears to include 3 stable modules: module A is composed of EIF3A, EIF3B, EIF3G and EIF3I; module B is composed of EIF3F, EIF3H, and EIF3M; and module C is composed of EIF3C, EIF3D, EIF3E, EIF3K and EIF3L. EIF3C of module C binds EIF3B of module A and EIF3H of module B, thereby linking the three modules. EIF3J is a labile subunit that binds to the eIF-3 complex via EIF3B. The eIF-3 complex interacts with RPS6KB1 under conditions of nutrient depletion. Mitogenic stimulation leads to binding and activation of a complex composed of MTOR and RPTOR, leading to phosphorylation and release of RPS6KB1 and binding of EIF4B to eIF-3. Interacts with RNF139; the interaction leads to protein translation inhibitions in a ubiquitination-dependent manner. Interacts with DTX1, the interaction is required for deubiquitinating activity towards NOTCH1. Post-translationally, phosphorylation is enhanced upon serum stimulation. Phosphorylated during apoptosis by caspase-processed CDK11.

Its subcellular location is the cytoplasm. The catalysed reaction is Thiol-dependent hydrolysis of ester, thioester, amide, peptide and isopeptide bonds formed by the C-terminal Gly of ubiquitin (a 76-residue protein attached to proteins as an intracellular targeting signal).. Functionally, component of the eukaryotic translation initiation factor 3 (eIF-3) complex, which is required for several steps in the initiation of protein synthesis. The eIF-3 complex associates with the 40S ribosome and facilitates the recruitment of eIF-1, eIF-1A, eIF-2:GTP:methionyl-tRNAi and eIF-5 to form the 43S pre-initiation complex (43S PIC). The eIF-3 complex stimulates mRNA recruitment to the 43S PIC and scanning of the mRNA for AUG recognition. The eIF-3 complex is also required for disassembly and recycling of post-termination ribosomal complexes and subsequently prevents premature joining of the 40S and 60S ribosomal subunits prior to initiation. The eIF-3 complex specifically targets and initiates translation of a subset of mRNAs involved in cell proliferation, including cell cycling, differentiation and apoptosis, and uses different modes of RNA stem-loop binding to exert either translational activation or repression. In terms of biological role, deubiquitinates activated NOTCH1, promoting its nuclear import, thereby acting as a positive regulator of Notch signaling. This Homo sapiens (Human) protein is Eukaryotic translation initiation factor 3 subunit F.